The chain runs to 486 residues: Probable cytosol aminopeptidase (486 aa).

Residues K256 and D261 each coordinate Mn(2+). K268 is a catalytic residue. Positions 280, 339, and 341 each coordinate Mn(2+). R343 is an active-site residue.

Belongs to the peptidase M17 family. The cofactor is Mn(2+).

The protein resides in the cytoplasm. It carries out the reaction Release of an N-terminal amino acid, Xaa-|-Yaa-, in which Xaa is preferably Leu, but may be other amino acids including Pro although not Arg or Lys, and Yaa may be Pro. Amino acid amides and methyl esters are also readily hydrolyzed, but rates on arylamides are exceedingly low.. It catalyses the reaction Release of an N-terminal amino acid, preferentially leucine, but not glutamic or aspartic acids.. Its function is as follows. Presumably involved in the processing and regular turnover of intracellular proteins. Catalyzes the removal of unsubstituted N-terminal amino acids from various peptides. The protein is Probable cytosol aminopeptidase of Synechococcus sp. (strain ATCC 27144 / PCC 6301 / SAUG 1402/1) (Anacystis nidulans).